The sequence spans 607 residues: (R)-limonene synthase 1, chloroplastic (607 aa).

A chloroplast-targeting transit peptide spans 1–52 (MSSCINPSTLATSVNGFKCLPLATNRAAIRIMAKNKPVQCLVSTKYDNLTVD). 2 residues coordinate Mn(2+): Asp-343 and Asp-347. Substrate-binding residues include Asp-343, Asp-347, Arg-485, Asp-488, and Lys-504. The DDXXD motif motif lies at 343–347 (DDIYD). Asp-488 is a Mn(2+) binding site.

The protein belongs to the terpene synthase family. The cofactor is Mg(2+). Requires Mn(2+) as cofactor.

It localises to the plastid. Its subcellular location is the chloroplast. It catalyses the reaction (2E)-geranyl diphosphate = (4R)-limonene + diphosphate. Inhibited by 2-fluorogeranyl diphosphate (FGPP) and 2-fluoroneryl diphosphate (FNPP). Its function is as follows. Catalyzes the conversion of geranyl diphosphate to (+)-(4R)-limonene. Produces exclusively the (+)-enantiomer. Can use neryl diphosphate as substrate. Has no activity with farnesyl diphosphate. The polypeptide is (R)-limonene synthase 1, chloroplastic (Citrus sinensis (Sweet orange)).